Reading from the N-terminus, the 50-residue chain is MAREGFTLECTSCKMQNYISKKNKKLHPEKVKLSKYCSKCSKHSVHKERK.

This sequence belongs to the bacterial ribosomal protein bL33 family.

This is Large ribosomal subunit protein bL33 from Mycoplasmopsis synoviae (strain 53) (Mycoplasma synoviae).